A 335-amino-acid chain; its full sequence is tRNA N6-adenosine threonylcarbamoyltransferase (335 aa).

Residues His109, His113, and Tyr130 each contribute to the a divalent metal cation site. Substrate contacts are provided by residues 130-134, Asp162, Gly177, Glu181, and Asn266; that span reads YVSGG. Asp294 serves as a coordination point for a divalent metal cation.

The protein belongs to the KAE1 / TsaD family. In terms of assembly, component of the EKC/KEOPS complex composed of at least GON7, TP53RK, TPRKB, OSGEP and LAGE3; the whole complex dimerizes. A divalent metal cation serves as cofactor. Widely expressed at low level. Expressed at intermediate level in lung. Weakly expressed in testis, skeletal muscle, kidney, liver, spleen, brain and heart.

The protein resides in the cytoplasm. It localises to the nucleus. It carries out the reaction L-threonylcarbamoyladenylate + adenosine(37) in tRNA = N(6)-L-threonylcarbamoyladenosine(37) in tRNA + AMP + H(+). Its function is as follows. Component of the EKC/KEOPS complex that is required for the formation of a threonylcarbamoyl group on adenosine at position 37 (t(6)A37) in tRNAs that read codons beginning with adenine. The complex is probably involved in the transfer of the threonylcarbamoyl moiety of threonylcarbamoyl-AMP (TC-AMP) to the N6 group of A37. OSGEP likely plays a direct catalytic role in this reaction, but requires other protein(s) of the complex to fulfill this activity. The protein is tRNA N6-adenosine threonylcarbamoyltransferase (Osgep) of Mus musculus (Mouse).